The following is a 371-amino-acid chain: Protein SOMBRERO (371 aa).

In terms of domain architecture, NAC spans 17 to 166; that stretch reads VPPGFRFHPT…GWVVCRVFKK (150 aa). The DNA-binding element occupies 118–172; the sequence is IGLRKTLVFYTGRAPHGQKTEWIMHEYRLDDSENEIQEDGWVVCRVFKKKNHFRG. 2 disordered regions span residues 176 to 213 and 316 to 355; these read EQEQ…LILH and VQNH…NQRF. The span at 192 to 201 shows a compositional bias: basic and acidic residues; sequence NDHDHHHHID. Composition is skewed to low complexity over residues 202-213 and 340-349; these read SNSNNHSPLILH and GNNNGGSSSS.

As to expression, accumulates in maturing root cap cells, in both COL and LRC cells.

Its subcellular location is the nucleus. Its function is as follows. Transcription regulator. Together with BRN1 and BRN2, regulates cellular maturation of root cap. Represses stem cell-like divisions in the root cap daughter cells, and thus promotes daughter cell fate. Inhibits expression of its positive regulator FEZ in a feedback loop for controlled switches in cell division plane. Promotes the expression of genes involved in secondary cell walls (SCW) biosynthesis. In Arabidopsis thaliana (Mouse-ear cress), this protein is Protein SOMBRERO (SMB).